Consider the following 515-residue polypeptide: Maturase K (515 aa).

This sequence belongs to the intron maturase 2 family. MatK subfamily.

It localises to the plastid. It is found in the chloroplast. Its function is as follows. Usually encoded in the trnK tRNA gene intron. Probably assists in splicing its own and other chloroplast group II introns. The polypeptide is Maturase K (Helonias bullata (Swamp pink)).